The following is a 204-amino-acid chain: Large ribosomal subunit protein uL4 (204 aa).

The tract at residues 53-77 is disordered; it reads ISDVSGTTAKPYSQKRTGRARQGSL. The segment covering 56 to 67 has biased composition (polar residues); that stretch reads VSGTTAKPYSQK.

This sequence belongs to the universal ribosomal protein uL4 family. As to quaternary structure, part of the 50S ribosomal subunit.

One of the primary rRNA binding proteins, this protein initially binds near the 5'-end of the 23S rRNA. It is important during the early stages of 50S assembly. It makes multiple contacts with different domains of the 23S rRNA in the assembled 50S subunit and ribosome. Its function is as follows. Forms part of the polypeptide exit tunnel. The protein is Large ribosomal subunit protein uL4 of Wolbachia sp. subsp. Brugia malayi (strain TRS).